Here is a 902-residue protein sequence, read N- to C-terminus: Protein translocase subunit SecA (902 aa).

ATP is bound by residues Gln87, 105–109 (GEGKT), and Asp512. Residues 851–902 (LARQQQLSHQAPVEELTQGSAAAAQEGRKVGRNDPCPCGSGKKFKHCHGKLQ) are disordered. Zn(2+) is bound by residues Cys886, Cys888, Cys897, and His898. Positions 892 to 902 (KKFKHCHGKLQ) are enriched in basic residues.

It belongs to the SecA family. In terms of assembly, monomer and homodimer. Part of the essential Sec protein translocation apparatus which comprises SecA, SecYEG and auxiliary proteins SecDF-YajC and YidC. Zn(2+) is required as a cofactor.

Its subcellular location is the cell inner membrane. The protein localises to the cytoplasm. It catalyses the reaction ATP + H2O + cellular proteinSide 1 = ADP + phosphate + cellular proteinSide 2.. Its function is as follows. Part of the Sec protein translocase complex. Interacts with the SecYEG preprotein conducting channel. Has a central role in coupling the hydrolysis of ATP to the transfer of proteins into and across the cell membrane, serving both as a receptor for the preprotein-SecB complex and as an ATP-driven molecular motor driving the stepwise translocation of polypeptide chains across the membrane. In Sodalis glossinidius (strain morsitans), this protein is Protein translocase subunit SecA.